We begin with the raw amino-acid sequence, 2258 residues long: MEEFIPEVFYQNQVQSLKKILKSWKRDTSIYAYLAREQEVLAFLVLSPAHIAKLNKLLTEESARCALLAQNCETIEALAVVRQALQGVTLHFGDNGMEKGWLHMMKALDACLDESFSENAAALKKSIQAVGHKLIAAKNRIESCERSVNHLTTFQFAREYGLSTTYFEKLSNFGGHIRSFVWSSDSGEIFPKPKRSSRTKRISTFTSYYWGEFWCNCIWLLCSLWSPARWCFNSVVFIWSLCGVLNLSMVVLQFTLKRHFGRYYFRYVMSGVLAICAVCCVHLKNRKGPILQASQKDKRFIGILAFCITVIYMFDVDLADSLSNNLHKISRLVNLFLDDNRGFATPALDNLTDFTTILQSGTSSDDLKIVQDTLAVVLQVDDEDATQDDAIYDSDGLQTFKQWVSHNQLAGMQLARPLQYPCSTTYGLTADNVAELATSMAQEAKQWSQVVGHTGSGKSTRLPTAYANCLKGLAGRKKNVLVCEPTRAATVNVTSGISQNFGRLVYGRHEGWSNLGDKTIQVMTYGSALAAWKVDNKFLSQFDAVFLDESHLITTHALVFESICQEVTNVRKFYVSATPRDGKKCPEAVRRYEIKTVKSECSSVDTFVRSQDKENSLYVLQHETVLVFLAGKAECDRAASNWNKLYSTNMYAYSLTGDNFTVAYENIVTRMLTDRIIVFCTNILETGVTLNVDCVVDFGFTMRPELDLVDKSLTLMRRRVTENERAQRIGRAGRLRTGHAICIGNPETRHDLVPPETLYEAALLSFVHGVQFYINEHFENAWIEGVTKSQASVMTQFKLSPFLMRDIVRDDGAIPLSLHKILKNYTHRNTDLIGTKLSVMSHVYNSWPLYRTVHQSIFRGDSNVPQALKHARVPFNVSTAHDFPWENFAQACLEFQPRVLQVFSDSSSTSRIINLQIGKMHIVNSMEEVKININSYQRSAENLRSVKDSFESSIFRTKLLRGNPTGKITKRIETLLDNVRVLQQVHAKLEIIAYSGGEKLNMDKKSVDELNEIVELQSKNSLTAEELARILHLTKPTSTFFNLFAERGRQMLVTLLVMVAASLMYLVFWVSPRKQDDITIEGKGRAYNRDKRMGYDSYEEDEVRHKINKKFKERSTRFSNDSKPETSSKYRNLKQEFVNFYDLKTDANVLQAVFTAMDGAVLLQTEAPMADIDRVNRLLNDHFEDSESQAAHEGLNTMVKCHLTMKDGRQFELDMEQHDPETIAKLGGEVGFRMNRYDLRQVGATRYINPKAQTSAATLEGMTMKPMSAFTIDSAKMVGFIKTAKDTLNCILYGDWIIAPAHIQQGEGDITFIFQHTQFTTTTERLASYGIRQFKGLDLVVIRRPQQIRAVKKDMRASILDTPTEVQMLYLSTKGGKYQVSTSAVCFPHYNNRWGHVISTAEGMCGCIVFNPTTNHIVGIHVSYNDTRRRNEFQAFTSDVLTTINAPGHEIPFSPWVFDWKFCGYTTKPRNMQSAPSTLERLNINATGFGFKLNAQGIKPAMLRSTETFSREFPNTQFKLIGEVKKGLIDKHTITGENPYFLEFLNTFKPYQWVQAFMDEYAPSILAYDAYFKDLKKYDRPPHASVFCEDTLTKAKHKMIKILEEAGMGRTLVRTTEQVLLDMAWTTSGGPLYHGKKIDIVQHLSDDELVQFSEACQQALITGTLDGVWNGSLKAELRSSQKILERKTRVFTAAPITSLIAMKYYVDDFNKQFYKTHLKAPHTVGINKFNRGWQNLYEKLNKPGWTHGSGDGSRFDSSIDGFLFDVIKDIRKHFMDAEHHKQLDTIYEEIVNTKICLANGLVIQKNCGNNSGQPSTVVDNTLALMTSFLYAYARLTGDDTFELMDENFVFVCNGDDNKFAMSPSFMVKFGCDFSPFLSELGLTYEFDEATEDICENPYMSLTMVRTSFGIGFSLSIERIVAILQWSRAGGVLHAYLSGIAALFESFNTPKLFNLVHTYLLWLVTEHEEELFSMMELKDMFMPLPTKEQIALLHYVGTEPIMEETYLQSGKDDPDPIVPPVSDTDLTNMAAAPPDNRRSRAVVPRGTSDWNLPEPKMRMLGFKSKINIETLADVPEGYMNTFASVATETQRRKWEEATRGDFGITDNEKWEKLLIAACIYFADNGTSPNFDEELTMEVNGGLNSIKEYPVRPFVVRAKKISTLRRIFRCYSIETKLMFVKLRRVPQWAIKHGCLDEIVFDFMIPDQFTSRTALETLKQTKLAAIGVGTSNSLLTSEQTNMRTTETRRRNDYDGHEALLR.

The Helicase ATP-binding domain maps to 439–597 (SMAQEAKQWS…AVRRYEIKTV (159 aa)). 487 to 494 (RAATVNVT) is an ATP binding site. A Helicase C-terminal domain is found at 612 to 778 (DKENSLYVLQ…GVQFYINEHF (167 aa)). The residue at position 1141 (Tyr1141) is an O-(5'-phospho-RNA)-tyrosine. The 220-residue stretch at 1257-1476 (ATLEGMTMKP…TKPRNMQSAP (220 aa)) folds into the Peptidase C4 domain. Active-site for nuclear inclusion protein A activity residues include His1302, Asp1338, and Cys1405. Positions 1745-1869 (WTHGSGDGSR…AMSPSFMVKF (125 aa)) constitute a RdRp catalytic domain. 2 disordered regions span residues 2027–2047 (NMAA…RGTS) and 2233–2258 (TSEQ…ALLR). Over residues 2242–2258 (TETRRRNDYDGHEALLR) the composition is skewed to basic and acidic residues.

Belongs to the bymoviruses polyprotein 1 family. VPg is uridylylated by the polymerase and is covalently attached to the 5'-end of the genomic RNA. This uridylylated form acts as a nucleotide-peptide primer for the polymerase. In terms of processing, the viral RNA1 of bymoviruses is expressed as a single polyprotein which undergoes post-translational proteolytic processing by the main proteinase NIa-pro resulting in the production of at least eight individual proteins.

The protein resides in the host cytoplasmic vesicle. It localises to the virion. It catalyses the reaction RNA(n) + a ribonucleoside 5'-triphosphate = RNA(n+1) + diphosphate. The catalysed reaction is Hydrolyzes glutaminyl bonds, and activity is further restricted by preferences for the amino acids in P6 - P1' that vary with the species of potyvirus, e.g. Glu-Xaa-Xaa-Tyr-Xaa-Gln-|-(Ser or Gly) for the enzyme from tobacco etch virus. The natural substrate is the viral polyprotein, but other proteins and oligopeptides containing the appropriate consensus sequence are also cleaved.. Its function is as follows. Indispensable for virus replication. In terms of biological role, mediates the cap-independent, EIF4E-dependent translation of viral genomic RNAs. Binds to the cap-binding site of host EIF4E and thus interferes with the host EIF4E-dependent mRNA export and translation. VPg-RNA directly binds EIF4E and is a template for transcription. Also forms trimeric complexes with EIF4E-EIF4G, which are templates for translation. Functionally, has RNA-binding and proteolytic activities. An RNA-dependent RNA polymerase that plays an essential role in the virus replication. In Barley mild mosaic virus (strain Na1) (BaMMV), this protein is Genome polyprotein 1.